The following is a 228-amino-acid chain: RING1 and YY1-binding protein (228 aa).

Disordered stretches follow at residues 1-21 (MTMG…PAAD), 47-157 (RKGT…STAQ), and 172-228 (DFKE…DESF). The segment at 21 to 50 (DEGFWDCSVCTFRNSAEAFKCSICDVRKGT) adopts a RanBP2-type zinc-finger fold. Residues 76 to 98 (PKKEKKEKVEKPDKEKPEKDKDI) show a composition bias toward basic and acidic residues. A Glycyl lysine isopeptide (Lys-Gly) (interchain with G-Cter in SUMO2) cross-link involves residue Lys-77. Ser-99 is modified (phosphoserine). A compositionally biased stretch (basic and acidic residues) spans 113 to 122 (PKSDILKDPP). Phosphoserine occurs at positions 123, 127, and 130. Residues 124-143 (EANSIQSANATTKTSETNHT) are compositionally biased toward polar residues. Positions 143 to 226 (TSRPRLKNVD…KGDMSAVNDE (84 aa)) are interaction with GABPB1 and FANK1. A compositionally biased stretch (low complexity) spans 179 to 204 (SSSTSSSTVTSSAGSEQQNQSSSGSE). Ser-227 is modified (phosphoserine).

In terms of assembly, monomer. Component of repressive BCOR complex containing Polycomb group subcomplex at least composed of BCOR, PCGF1, RING1 and RNF2/RING2. Component of PCR1-like complexes. Interacts with PCGF1. Part of a PCR1-like complex that contains AUTS2, PCGF5, RNF2, CSNK2B and RYBP. Interacts with RNF2; the interaction is direct. Interacts with CBX2, YAF2, RING1 and RNF2. Interacts with ubiquitin and ubiquitinated proteins. Interacts with ubiquitinated histone H2A. Interacts with apoptin, DEDD, FADD, CASP8, CASP10, YY1 and GABPB1. Together with GABPB1 and YY1, it forms a ternary complex, probably being the bridge factor between these two transcription factors. Interacts with MDM2, and thereby inhibits ubiquitination of TP53. Identified in a ternary complex containing MDM2, TP53 and RYBP. Interacts with FANK1; may prevent the ubiquitin-mediated proteasomal degradation of FANK1. Interacts with IFT57. Post-translationally, monoubiquitinated. In terms of tissue distribution, expressed in embryonic stem cells.

The protein localises to the nucleus. It is found in the cytoplasm. It localises to the nucleoplasm. Functionally, component of a Polycomb group (PcG) multiprotein PRC1-like complex, a complex class required to maintain the transcriptionally repressive state of many genes, including Hox genes, throughout development. PcG PRC1-like complex acts via chromatin remodeling and modification of histones; it mediates monoubiquitination of histone H2A 'Lys-119', rendering chromatin heritably changed in its expressibility. Component of a PRC1-like complex that mediates monoubiquitination of histone H2A 'Lys-119' on the X chromosome and is required for normal silencing of one copy of the X chromosome in XX females. May stimulate ubiquitination of histone H2A 'Lys-119' by recruiting the complex to target sites. Inhibits ubiquitination and subsequent degradation of TP53, and thereby plays a role in regulating transcription of TP53 target genes. May also regulate the ubiquitin-mediated proteasomal degradation of other proteins like FANK1 to regulate apoptosis. May be implicated in the regulation of the transcription as a repressor of the transcriptional activity of E4TF1. May bind to DNA. May play a role in the repression of tumor growth and metastasis in breast cancer by down-regulating SRRM3. This Mus musculus (Mouse) protein is RING1 and YY1-binding protein (Rybp).